The following is a 504-amino-acid chain: DnaJ homolog subfamily C member 3 (504 aa).

The signal sequence occupies residues methionine 1–cysteine 31. TPR repeat units lie at residues valine 37–asparagine 70, isoleucine 72–phenylalanine 104, threonine 105–glutamate 138, methionine 154–aspartate 187, alanine 188–asparagine 221, threonine 222–histidine 255, leucine 268–valine 301, valine 306–asparagine 339, and valine 340–aspartate 373. A disulfide bond links cysteine 248 and cysteine 258. Serine 274 carries the post-translational modification Phosphoserine. Cysteines 313 and 329 form a disulfide. Residues glutamine 375–arginine 393 form a flexible linker region. The 69-residue stretch at aspartate 394–glutamate 462 folds into the J domain. Residues aspartate 451 to serine 481 are disordered.

Interacts with EIF2AK4/GCN2; this interaction occurs under endoplasmic reticulum (ER) stress, hypothermic and amino acid starving stress conditions and inhibits EIF2AK4/GCN2 kinase activity. Interacts with EIF2AK3. Interacts with EIF2AK2. Forms a trimeric complex with DNAJB1 and HSPA8. Interacts with THAP12. As to expression, widely expressed, with high level in the liver.

It is found in the endoplasmic reticulum. Involved in the unfolded protein response (UPR) during endoplasmic reticulum (ER) stress. Acts as a negative regulator of the EIF2AK4/GCN2 kinase activity by preventing the phosphorylation of eIF-2-alpha at 'Ser-52' and hence attenuating general protein synthesis under ER stress, hypothermic and amino acid starving stress conditions. Co-chaperone of HSPA8/HSC70, it stimulates its ATPase activity. May inhibit both the autophosphorylation of EIF2AK2/PKR and the ability of EIF2AK2 to catalyze phosphorylation of the EIF2A. May inhibit EIF2AK3/PERK activity. This Mus musculus (Mouse) protein is DnaJ homolog subfamily C member 3 (Dnajc3).